Reading from the N-terminus, the 108-residue chain is Ig kappa chain V-V region HP 124E1 (108 aa).

The segment at 1 to 23 (DIQMTQTTSSLSASLGDRVTISC) is framework-1. The cysteines at positions 23 and 88 are disulfide-linked. Residues 24-34 (RASQDINNYLN) are complementarity-determining-1. The tract at residues 35–49 (WYQQKPDGTVKLLIY) is framework-2. A complementarity-determining-2 region spans residues 50–56 (YTSRLHS). The segment at 57–88 (GVPSRFSGSGSGTDYSLTISNLEQEDIATYFC) is framework-3. Positions 89 to 97 (QQGKTLPRT) are complementarity-determining-3. Residues 98–108 (FGGGTKLEIKR) are framework-4.

In Mus musculus (Mouse), this protein is Ig kappa chain V-V region HP 124E1.